Here is a 500-residue protein sequence, read N- to C-terminus: Protein FAM83F (500 aa).

Residue Ala2 is modified to N-acetylalanine. The DUF1669 stretch occupies residues 2–300; that stretch reads AESQLNCLDE…LYAISEEVDL (299 aa). Ser4 bears the Phosphoserine mark. Disordered regions lie at residues 82–109, 347–366, and 391–500; these read NARG…AYWP, QQRE…SGGE, and IPLG…CVIS. Basic and acidic residues predominate over residues 397-419; that stretch reads SQKDGRMVSHMHRDLKPKSREAP. Low complexity-rich tracts occupy residues 425 to 442 and 458 to 468; these read GEAA…SSRL and SSVSTETSEVE. Positions 477–500 are enriched in polar residues; the sequence is ENSSADISGKTSPSSAKPSNCVIS. Ser479 bears the Phosphoserine mark.

The protein belongs to the FAM83 family. Directly interacts (via DUF1669) with CSNK1A1 and CSNK1A1L.

The protein resides in the cell membrane. The chain is Protein FAM83F (FAM83F) from Homo sapiens (Human).